Consider the following 156-residue polypeptide: Cyanate hydratase (156 aa).

Residues Arg-96, Glu-99, and Ser-122 contribute to the active site.

Belongs to the cyanase family.

It catalyses the reaction cyanate + hydrogencarbonate + 3 H(+) = NH4(+) + 2 CO2. Functionally, catalyzes the reaction of cyanate with bicarbonate to produce ammonia and carbon dioxide. This Burkholderia thailandensis (strain ATCC 700388 / DSM 13276 / CCUG 48851 / CIP 106301 / E264) protein is Cyanate hydratase.